Reading from the N-terminus, the 149-residue chain is 1,4-dihydroxy-2-naphthoyl-CoA hydrolase (149 aa).

Asp-19 is an active-site residue.

Belongs to the 4-hydroxybenzoyl-CoA thioesterase family. DHNA-CoA hydrolase subfamily.

The enzyme catalyses 1,4-dihydroxy-2-naphthoyl-CoA + H2O = 1,4-dihydroxy-2-naphthoate + CoA + H(+). It participates in cofactor biosynthesis; phylloquinone biosynthesis. The protein operates within quinol/quinone metabolism; 1,4-dihydroxy-2-naphthoate biosynthesis; 1,4-dihydroxy-2-naphthoate from chorismate: step 7/7. In terms of biological role, catalyzes the hydrolysis of 1,4-dihydroxy-2-naphthoyl-CoA (DHNA-CoA) to 1,4-dihydroxy-2-naphthoate (DHNA), a reaction involved in phylloquinone (vitamin K1) biosynthesis. The chain is 1,4-dihydroxy-2-naphthoyl-CoA hydrolase from Synechococcus sp. (strain CC9605).